Here is a 135-residue protein sequence, read N- to C-terminus: Protein PsiE homolog (135 aa).

The next 4 helical transmembrane spans lie at 13–33 (VLQW…VIFL), 54–74 (YMLV…ALIV), 82–102 (HFPL…LIIV), and 107–127 (PNDT…LYLA).

It belongs to the PsiE family.

It localises to the cell inner membrane. This chain is Protein PsiE homolog, found in Edwardsiella ictaluri (strain 93-146).